We begin with the raw amino-acid sequence, 249 residues long: Octanoyltransferase (249 aa).

One can recognise a BPL/LPL catalytic domain in the interval 53–234 (PDTDDEIWVV…RLIAHLDGAT (182 aa)). Substrate-binding positions include 93-100 (RGGQITYH), 165-167 (ALG), and 178-180 (GLS). The active-site Acyl-thioester intermediate is the cysteine 196.

It belongs to the LipB family.

The protein resides in the cytoplasm. It carries out the reaction octanoyl-[ACP] + L-lysyl-[protein] = N(6)-octanoyl-L-lysyl-[protein] + holo-[ACP] + H(+). The protein operates within protein modification; protein lipoylation via endogenous pathway; protein N(6)-(lipoyl)lysine from octanoyl-[acyl-carrier-protein]: step 1/2. Catalyzes the transfer of endogenously produced octanoic acid from octanoyl-acyl-carrier-protein onto the lipoyl domains of lipoate-dependent enzymes. Lipoyl-ACP can also act as a substrate although octanoyl-ACP is likely to be the physiological substrate. The polypeptide is Octanoyltransferase (Burkholderia mallei (strain NCTC 10247)).